The primary structure comprises 1006 residues: Beta-galactosidase (1006 aa).

The signal sequence occupies residues 1-19; the sequence is MKLSSACAIALLAAQAAGA. N156 carries N-linked (GlcNAc...) asparagine glycosylation. Catalysis depends on E200, which acts as the Proton donor. The active-site Nucleophile is E298. N-linked (GlcNAc...) asparagine glycans are attached at residues N373, N402, N422, N478, N522, N622, N739, N760, N777, and N805.

It belongs to the glycosyl hydrolase 35 family.

The catalysed reaction is Hydrolysis of terminal non-reducing beta-D-galactose residues in beta-D-galactosides.. Its function is as follows. Cleaves beta-linked terminal galactosyl residues from gangliosides, glycoproteins, and glycosaminoglycans. In Aspergillus niger, this protein is Beta-galactosidase (lacA).